The chain runs to 277 residues: Collectin-10 (277 aa).

Positions 1 to 27 are cleaved as a signal peptide; that stretch reads MSRKKEQQLRKYGTLVVLFIFQVQIFG. A disordered region spans residues 41 to 82; that stretch reads THTILPGPKGDDGEKGDRGEVGKQGKVGPKGPKGNKGTVGDV. Residues 49–63 show a composition bias toward basic and acidic residues; that stretch reads KGDDGEKGDRGEVGK. The 60-residue stretch at 56-115 folds into the Collagen-like domain; sequence GDRGEVGKQGKVGPKGPKGNKGTVGDVGDQGMLGKIGPIGGKGDKGAKGISGVSGKKGKA. Residues 64-79 show a composition bias toward low complexity; sequence QGKVGPKGPKGNKGTV. In terms of domain architecture, C-type lectin spans 155-271; it reads TDEKFYYIVK…CQVTIYFICE (117 aa). 2 disulfides stabilise this stretch: Cys-176–Cys-270 and Cys-248–Cys-262. An N-linked (GlcNAc...) asparagine glycan is attached at Asn-258.

This sequence belongs to the COLEC10/COLEC11 family. Widely expressed. Highly expressed in lung. Weakly expressed in larynx, syrinx and cranial air sac. Expressed throughout the lower gastrointestinal tract in increasing levels starting from a faint signal in duodenum and ending with relatively high signals in proctodeum, coprodeum and urodeum. In the upper part of the gastrointestinal tract, expressed in tongue, crop, and mucosa of the crop.

Its subcellular location is the secreted. The protein resides in the golgi apparatus. It localises to the cytoplasm. Its function is as follows. Lectin that binds to various sugars: galactose &gt; mannose = fucose &gt; N-acetylglucosamine &gt; N-acetylgalactosamine. Acts as a chemoattractant, probably involved in the regulation of cell migration. This is Collectin-10 (COLEC10) from Gallus gallus (Chicken).